Here is a 115-residue protein sequence, read N- to C-terminus: U3-lycotoxin-Ls1k (115 aa).

An N-terminal signal peptide occupies residues 1–20 (MKFELLFGVLLVTLFSYSSA). Positions 21-44 (EMLDDFDQADEDELLSLIEKEEAR) are excised as a propeptide. 4 disulfides stabilise this stretch: Cys-48–Cys-63, Cys-55–Cys-72, Cys-62–Cys-87, and Cys-74–Cys-85.

The protein belongs to the neurotoxin 19 (CSTX) family. 01 subfamily. Expressed by the venom gland.

The protein resides in the secreted. The protein is U3-lycotoxin-Ls1k of Lycosa singoriensis (Wolf spider).